The sequence spans 371 residues: Riboflavin biosynthesis protein RibD (371 aa).

Residues 1-122 (MEEYYMNTAI…MLEEAGIEVK (122 aa)) enclose the CMP/dCMP-type deaminase domain. Residues 1–144 (MEEYYMNTAI…KMFLHFMRTG (144 aa)) are deaminase. Zn(2+) is bound at residue His-49. The active-site Proton donor is Glu-51. Residues Cys-74 and Cys-83 each coordinate Zn(2+). Positions 145-371 (LPYVTLKAAA…KDGDDVYRNR (227 aa)) are reductase. Residue Ala-153 coordinates NADP(+). Ser-167 is a substrate binding site. Residue Trp-169 coordinates NADP(+). Arg-183 serves as a coordination point for substrate. Positions 195 and 199 each coordinate NADP(+). Residues Leu-203 and Arg-206 each contribute to the substrate site. Thr-221 contributes to the NADP(+) binding site. Substrate is bound at residue Glu-290. 292–298 (GASVHGS) is an NADP(+) binding site.

It in the N-terminal section; belongs to the cytidine and deoxycytidylate deaminase family. This sequence in the C-terminal section; belongs to the HTP reductase family. Zn(2+) is required as a cofactor.

It catalyses the reaction 2,5-diamino-6-hydroxy-4-(5-phosphoribosylamino)-pyrimidine + H2O + H(+) = 5-amino-6-(5-phospho-D-ribosylamino)uracil + NH4(+). It carries out the reaction 5-amino-6-(5-phospho-D-ribitylamino)uracil + NADP(+) = 5-amino-6-(5-phospho-D-ribosylamino)uracil + NADPH + H(+). Its pathway is cofactor biosynthesis; riboflavin biosynthesis; 5-amino-6-(D-ribitylamino)uracil from GTP: step 2/4. It functions in the pathway cofactor biosynthesis; riboflavin biosynthesis; 5-amino-6-(D-ribitylamino)uracil from GTP: step 3/4. Its function is as follows. Converts 2,5-diamino-6-(ribosylamino)-4(3h)-pyrimidinone 5'-phosphate into 5-amino-6-(ribosylamino)-2,4(1h,3h)-pyrimidinedione 5'-phosphate. The chain is Riboflavin biosynthesis protein RibD (ribD) from Bacillus amyloliquefaciens (Bacillus velezensis).